A 390-amino-acid chain; its full sequence is Zinc finger protein 121 (390 aa).

Residues 88 to 110 (FEYSDCEEAFVDQSHLQANRITH) form a C2H2-type 1; degenerate zinc finger. Residues 116-138 (YEQKQCGRAFTYSTSHAVSVKMH) form a C2H2-type 2; degenerate zinc finger. 9 consecutive C2H2-type zinc fingers follow at residues 144-166 (YECK…MRTH), 172-194 (YECK…VRIH), 200-222 (YQCK…VRIH), 228-250 (YECN…FKTH), 256-278 (FECK…FRIH), 284-306 (YKCK…VKIH), 312-334 (YECK…IRTH), 340-362 (YICK…VRIH), and 368-390 (YICN…LKTH).

This sequence belongs to the krueppel C2H2-type zinc-finger protein family.

Its subcellular location is the nucleus. Functionally, may be involved in transcriptional regulation. The protein is Zinc finger protein 121 (ZNF121) of Homo sapiens (Human).